The following is a 485-amino-acid chain: ATP synthase subunit beta, cyanelle (485 aa).

162–169 provides a ligand contact to ATP; sequence GGAGVGKT.

The protein belongs to the ATPase alpha/beta chains family. In terms of assembly, F-type ATPases have 2 components, CF(1) - the catalytic core - and CF(0) - the membrane proton channel. CF(1) has five subunits: alpha(3), beta(3), gamma(1), delta(1), epsilon(1). CF(0) has four main subunits: a(1), b(1), b'(1) and c(9-12).

The protein localises to the plastid. The protein resides in the cyanelle thylakoid membrane. The catalysed reaction is ATP + H2O + 4 H(+)(in) = ADP + phosphate + 5 H(+)(out). Functionally, produces ATP from ADP in the presence of a proton gradient across the membrane. The catalytic sites are hosted primarily by the beta subunits. The chain is ATP synthase subunit beta, cyanelle from Cyanophora paradoxa.